The chain runs to 239 residues: Guanylate kinase (239 aa).

Residues 55–235 (GRIFVITGPS…TLAELQAILL (181 aa)) enclose the Guanylate kinase-like domain. Residue 62–69 (GPSGVGKS) participates in ATP binding.

Belongs to the guanylate kinase family.

Its subcellular location is the cytoplasm. It carries out the reaction GMP + ATP = GDP + ADP. Essential for recycling GMP and indirectly, cGMP. This chain is Guanylate kinase (gmk), found in Mycoplasma pneumoniae (strain ATCC 29342 / M129 / Subtype 1) (Mycoplasmoides pneumoniae).